The following is an 804-amino-acid chain: MYNHKVVEKKWQDYWAKHDTFKTGTDSNKKNYYALDMFPFPSGKGLHVGHPEGYTATDIVSRMKRAQGYNVLHPMGWDAFGLPTEQYALKTGEDPEVVTKNNIANFKRQLNKLGFSYDWDREVTTSDPNYYKWTQWVFEQMYKKGLAYEAEVPVNWSPDLGTVVANEEIVDGKTERGGYPVYRRNMRQWMLKMTAYADRLLEDLDDLDWPEPVKEMQRNWIGRSLGAQVTFKIKDSDKTFDIFTTRPDTLFGCSYTVLAPENKLVQEITTDAQRDEVNAYIKKIESKSDLERTDLNKDKTGVFTGAYAINPVNGKEVPIWISDYVLASYGTGAVMAVPAHDERDYAFATKFGLPINPVLEGGDITKEAFTEDGPHINSEFLNGLNIKDAKKKMVEWLEEHNCGEKKVNYKLRDWDFSRQRYWGEPIPVIHWEDGETTLVPEDQLPLRLPHATDIKPSGTPESPLANLTDWVNVVDENGRKGKRETNTMPNWAGSSWYYLRYVDPHNDKELADYDLLKKWLPVDLYIGGAEHAVRHLLYARFWHKVLYDLGVVPTKEPFQRLYNQGLILKNHEKMSKSKGNVVNPDDVIDEYGADSLRMYEMFMGPLDASIDWDDNGPASTKKFLDRVWRLFVNDLDLKAIPQERIVDENDGELDKVYAETVKKVTEDFDALHFNTAISQMMVFMNAAQKAKTIPREYAEGFVKLLAPVAPHMMEEIWQVFGHDESISYAEWSTYDPAKLVESTVEIMVQVNGKLRGKFQAAKDADRDEVQKQAMELPHVQKFLEGKDVKKVIVVPNKIVNIVAK.

Positions 39-50 (PFPSGKGLHVGH) match the 'HIGH' region motif. The 'KMSKS' region signature appears at 573–577 (KMSKS). Lys-576 contacts ATP.

The protein belongs to the class-I aminoacyl-tRNA synthetase family.

It is found in the cytoplasm. The enzyme catalyses tRNA(Leu) + L-leucine + ATP = L-leucyl-tRNA(Leu) + AMP + diphosphate. The protein is Leucine--tRNA ligase of Lactobacillus acidophilus (strain ATCC 700396 / NCK56 / N2 / NCFM).